Reading from the N-terminus, the 494-residue chain is Cytochrome P450 2A13 (494 aa).

N297 contributes to the substrate binding site. C439 is a heme binding site.

This sequence belongs to the cytochrome P450 family. It depends on heme as a cofactor. In terms of tissue distribution, expressed in liver and a number of extrahepatic tissues, including nasal mucosa, lung, trachea, brain, mammary gland, prostate, testis, and uterus, but not in heart, kidney, bone marrow, colon, small intestine, spleen, stomach, thymus, or skeletal muscle.

It localises to the endoplasmic reticulum membrane. Its subcellular location is the microsome membrane. It catalyses the reaction an organic molecule + reduced [NADPH--hemoprotein reductase] + O2 = an alcohol + oxidized [NADPH--hemoprotein reductase] + H2O + H(+). Exhibits a coumarin 7-hydroxylase activity. Active in the metabolic activation of hexamethylphosphoramide, N,N-dimethylaniline, 2'-methoxyacetophenone, N-nitrosomethylphenylamine, and the tobacco-specific carcinogen, 4-(methylnitrosamino)-1-(3-pyridyl)-1-butanone. Possesses phenacetin O-deethylation activity. This is Cytochrome P450 2A13 (CYP2A13) from Homo sapiens (Human).